Consider the following 590-residue polypeptide: Putative laccase-19 (590 aa).

The signal sequence occupies residues 1–28; the sequence is MEKLSMVTSLLCAITVAVLAVAVVSGEA. Plastocyanin-like domains are found at residues 36-152 and 161-315; these read VVHE…PRDG and KDVP…YAGA. N-linked (GlcNAc...) asparagine glycans are attached at residues Asn-41 and Asn-47. His-86 and His-88 together coordinate Cu cation. N-linked (GlcNAc...) asparagine glycosylation occurs at Asn-120. Residues His-131 and His-133 each contribute to the Cu cation site. Residues Asn-205, Asn-344, Asn-378, Asn-397, Asn-434, and Asn-465 are each glycosylated (N-linked (GlcNAc...) asparagine). The 143-residue stretch at 424–566 folds into the Plastocyanin-like 3 domain; sequence DFPIRPPRPF…ATAFIVEDGP (143 aa). Residues Asn-483, His-486, His-488, His-545, Cys-546, His-547, His-551, and Met-556 each contribute to the Cu cation site. The disordered stretch occupies residues 565–590; it reads GPTPETSLPPPPPEFKRCGNNGLSQP.

It belongs to the multicopper oxidase family. Cu cation serves as cofactor.

It is found in the secreted. The protein localises to the extracellular space. Its subcellular location is the apoplast. It catalyses the reaction 4 hydroquinone + O2 = 4 benzosemiquinone + 2 H2O. In terms of biological role, lignin degradation and detoxification of lignin-derived products. The protein is Putative laccase-19 (LAC19) of Oryza sativa subsp. indica (Rice).